The following is a 181-amino-acid chain: Adenylate kinase (181 aa).

10-15 contributes to the ATP binding site; that stretch reads GAGKGT. An NMP region spans residues 30-59; it reads STGELFRRNIEKDTKLGHEAKKYLDAGDLV. Residues Thr31, Arg36, 57–59, 85–88, and Gln92 each bind AMP; these read DLV and GYPR. The tract at residues 126–132 is LID; it reads GRGRADD. Position 127 (Arg127) interacts with ATP. AMP-binding residues include Arg129 and Arg140. Gly166 is an ATP binding site.

It belongs to the adenylate kinase family. Monomer.

It is found in the cytoplasm. The enzyme catalyses AMP + ATP = 2 ADP. Its pathway is purine metabolism; AMP biosynthesis via salvage pathway; AMP from ADP: step 1/1. Its function is as follows. Catalyzes the reversible transfer of the terminal phosphate group between ATP and AMP. Plays an important role in cellular energy homeostasis and in adenine nucleotide metabolism. This Mycobacterium leprae (strain Br4923) protein is Adenylate kinase.